Reading from the N-terminus, the 491-residue chain is (S)-canadine synthase (491 aa).

Residues 6–26 (LLVCATVAIVFATTTIIRILF) form a helical membrane-spanning segment. Heme is bound at residue Cys434.

Belongs to the cytochrome P450 family. The cofactor is heme. As to expression, expressed at low levels in roots.

The protein localises to the endoplasmic reticulum membrane. The protein resides in the microsome membrane. It carries out the reaction (S)-tetrahydrocolumbamine + reduced [NADPH--hemoprotein reductase] + O2 = (S)-canadine + oxidized [NADPH--hemoprotein reductase] + 2 H2O + H(+). In terms of biological role, involved in the last but one step of the biosynthesis of berberine, an antimicrobial benzylisoquinoline alkaloid. Converts (S)-tetrahydrocolumbamine (THC) to (S)-tetrahydroberberine (THB) also called (S)-canadine. The sequence is that of (S)-canadine synthase (CYP719A1) from Coptis japonica (Japanese goldthread).